The chain runs to 380 residues: Beta-1,3-N-acetylglucosaminyltransferase lunatic fringe (380 aa).

The Cytoplasmic segment spans residues 1–8; the sequence is MLKRCGRR. A helical; Signal-anchor for type II membrane protein transmembrane segment spans residues 9-29; the sequence is LLLALAGALLACLLVLTADPP. The Lumenal segment spans residues 30–380; sequence PPPVPAERGR…TSWCPRSAIF (351 aa). The interval 85–110 is disordered; the sequence is SRRDVGPPPGGAPRPADGPPRPLAEP. The segment covering 90 to 107 has biased composition (pro residues); sequence GPPPGGAPRPADGPPRPL. A substrate-binding site is contributed by arginine 130. Asparagine 168 carries N-linked (GlcNAc...) asparagine glycosylation. 2 disulfide bridges follow: cysteine 169–cysteine 180 and cysteine 198–cysteine 261. Residue aspartate 202 participates in substrate binding. Position 203 (aspartate 203) interacts with Mn(2+). Aspartate 291 is an active-site residue. Position 315 (histidine 315) interacts with Mn(2+). An intrachain disulfide couples cysteine 365 to cysteine 374.

The protein belongs to the glycosyltransferase 31 family. Mn(2+) is required as a cofactor. It depends on Co(2+) as a cofactor. A soluble form may be derived from the membrane form by proteolytic processing.

It is found in the golgi apparatus. It localises to the golgi apparatus membrane. It catalyses the reaction 3-O-(alpha-L-fucosyl)-L-threonyl-[EGF-like domain protein] + UDP-N-acetyl-alpha-D-glucosamine = 3-O-(N-acetyl-beta-D-glucosaminyl-(1-&gt;3)-alpha-L-fucosyl)-L-threonyl-[EGF-like domain protein] + UDP + H(+). The enzyme catalyses 3-O-(alpha-L-fucosyl)-L-seryl-[EGF-like domain protein] + UDP-N-acetyl-alpha-D-glucosamine = 3-O-(N-acetyl-beta-D-glucosaminyl-(1-&gt;3)-alpha-L-fucosyl)-L-seryl-[EGF-like domain protein] + UDP + H(+). Glycosyltransferase that initiates the elongation of O-linked fucose residues attached to EGF-like repeats in the extracellular domain of Notch molecules. Modulates NOTCH1 activity by modifying O-fucose residues at specific EGF-like domains resulting in inhibition of NOTCH1 activation by JAG1 and enhancement of NOTCH1 activation by DLL1 via an increase in its binding to DLL1. Decreases the binding of JAG1 to NOTCH2 but not that of DLL1. Essential mediator of somite segmentation and patterning. This Bos taurus (Bovine) protein is Beta-1,3-N-acetylglucosaminyltransferase lunatic fringe (LFNG).